We begin with the raw amino-acid sequence, 467 residues long: Acid phosphatase PHO11 (467 aa).

Residues 1–17 (MLKSAVYSILAASLVNA) form the signal peptide. His-75 functions as the Nucleophile in the catalytic mechanism. N-linked (GlcNAc...) asparagine glycans are attached at residues Asn-97, Asn-162, Asn-192, Asn-250, and Asn-315. Asp-338 serves as the catalytic Proton donor. Asn-356, Asn-390, Asn-439, Asn-445, and Asn-461 each carry an N-linked (GlcNAc...) asparagine glycan.

Belongs to the histidine acid phosphatase family. Glycosylated during secretion across the membrane.

It carries out the reaction a phosphate monoester + H2O = an alcohol + phosphate. The sequence is that of Acid phosphatase PHO11 (PHO11) from Saccharomyces cerevisiae (strain ATCC 204508 / S288c) (Baker's yeast).